The sequence spans 421 residues: Testin (421 aa).

The region spanning M92–D199 is the PET domain. Positions E133 to C164 are disordered. Over residues P155 to C164 the composition is skewed to basic and acidic residues. 3 consecutive LIM zinc-binding domains span residues Y234–E297, P299–V359, and Q362–S421.

Belongs to the prickle / espinas / testin family. Interacts via LIM domain 1 with ZYX. Interacts (via LIM domain 3) with ENAH and VASP. Interacts with ALKBH4, talin, actin, alpha-actinin, GRIP1 and PXN. Interacts (via LIM domain 2) with ACTL7A (via N-terminus). Heterodimer with ACTL7A; the heterodimer interacts with ENAH to form a heterotrimer.

It is found in the cytoplasm. It localises to the cell junction. The protein resides in the focal adhesion. Scaffold protein that may play a role in cell adhesion, cell spreading and in the reorganization of the actin cytoskeleton. Plays a role in the regulation of cell proliferation. May act as a tumor suppressor. The polypeptide is Testin (TES) (Microcebus murinus (Gray mouse lemur)).